A 212-amino-acid polypeptide reads, in one-letter code: MKRSIVKNASLLGLFALLCTALVALVNQFTFERIKQQQDLELMRTLHQIIPDEMHDNALIEHCILIQDADVLGIDEPLPAYIASQGGEPVAIAMETVAPDGYNGQIKLIVAIDAKGEVLGVRTLNHNETPGLGDKIDLRKSSWVLGFKGQSIQGEQDKRWAVKKDGGQFDQFTGATITPRAYVGAVKRTLAYFNANQQTLLNRPANCEVQYE.

The helical transmembrane segment at 9–29 threads the bilayer; that stretch reads ASLLGLFALLCTALVALVNQF. Residue T176 is modified to FMN phosphoryl threonine.

The protein belongs to the RnfG family. As to quaternary structure, the complex is composed of six subunits: RnfA, RnfB, RnfC, RnfD, RnfE and RnfG. The cofactor is FMN.

The protein resides in the cell inner membrane. Functionally, part of a membrane-bound complex that couples electron transfer with translocation of ions across the membrane. In Shewanella loihica (strain ATCC BAA-1088 / PV-4), this protein is Ion-translocating oxidoreductase complex subunit G.